The primary structure comprises 562 residues: MTITFLILLFTVVKGDQICIGYHANNSTEKVDTILERNVTVTHAKDILEKTHNGKLCRLSGIPPLELGDCSIAGWLLGNPECDRLLSVPEWSYIVEKENPANGLCYPGNFNDYEELKHLLTRVTHFEKIKILPRDQWTQHTTTGGSRACAVSGNPSFFRNMVWLTKKGSNYPVAKGSYNNTSGEQMLVIWGIHHPNDDTEQRTLYQNVGTYVSVGTSTLNKRSIPEIATRPKVNGQGGRMEFSWTLLETWDVINFESTGNLIAPEYGFKISKRGSSGIMKTEKTLENCETKCQTPLGAINTTLPFHNIHPLTIGECPKYVKSDRLVLATGLRNVPQIESRGLFGAIAGFIEGGWQGMIDGWYGYHHSNDQGSGYAADKESTQKAIDGITNKVNSVIEKMNTQFEAVGKEFNNLERRLENLNKKMEDGFLDVWTYNAELLVLMENERTLDFHDSNVKNLYDKVRMQLRDNAKEIGNGCFEFYHKCDDECMNSVRNGTYDYPKYEEESKLNRNEIKGVKLSNMGVYQILAIYATVAGSLSLAIMIAGISFWMCSNGSLQCRICI.

Positions 1–15 (MTITFLILLFTVVKG) are cleaved as a signal peptide. Residues 16 to 525 (DQICIGYHAN…VKLSNMGVYQ (510 aa)) are Extracellular-facing. Cystine bridges form between Cys19–Cys477, Cys57–Cys288, Cys70–Cys82, Cys105–Cys149, Cys292–Cys316, and Cys484–Cys488. 3 N-linked (GlcNAc...) asparagine; by host glycosylation sites follow: Asn25, Asn26, and Asn38. Asn179, Asn180, and Asn300 each carry an N-linked (GlcNAc...) asparagine; by host glycan. Asn494 carries an N-linked (GlcNAc...) asparagine; by host glycan. The helical transmembrane segment at 526 to 546 (ILAIYATVAGSLSLAIMIAGI) threads the bilayer. The Cytoplasmic portion of the chain corresponds to 547–562 (SFWMCSNGSLQCRICI). Residues Cys551, Cys558, and Cys561 are each lipidated (S-palmitoyl cysteine; by host).

It belongs to the influenza viruses hemagglutinin family. As to quaternary structure, homotrimer of disulfide-linked HA1-HA2. Post-translationally, palmitoylated. In terms of processing, in natural infection, inactive HA is matured into HA1 and HA2 outside the cell by one or more trypsin-like, arginine-specific endoprotease secreted by the bronchial epithelial cells. One identified protease that may be involved in this process is secreted in lungs by club cells.

The protein resides in the virion membrane. It is found in the host apical cell membrane. Binds to sialic acid-containing receptors on the cell surface, bringing about the attachment of the virus particle to the cell. This attachment induces virion internalization either through clathrin-dependent endocytosis or through clathrin- and caveolin-independent pathway. Plays a major role in the determination of host range restriction and virulence. Class I viral fusion protein. Responsible for penetration of the virus into the cell cytoplasm by mediating the fusion of the membrane of the endocytosed virus particle with the endosomal membrane. Low pH in endosomes induces an irreversible conformational change in HA2, releasing the fusion hydrophobic peptide. Several trimers are required to form a competent fusion pore. In Influenza A virus (strain A/Mallard/New York/6750/1978 H2N2), this protein is Hemagglutinin.